The sequence spans 558 residues: Potassium-transporting ATPase potassium-binding subunit (558 aa).

A run of 12 helical transmembrane segments spans residues 1–21, 66–86, 127–147, 166–186, 245–265, 281–301, 327–347, 354–374, 377–397, 416–436, 482–502, and 531–551; these read MEII…SGYL, FNGF…WLFL, MIVM…VCIA, IVRF…ILLM, IWSN…MLFL, ALIL…LTMW, FGAG…TGSV, LTPI…VFGG, VGLM…SLMV, IVLV…LAFM, ISTG…QLMI, and IVFI…LGPI.

It belongs to the KdpA family. The system is composed of three essential subunits: KdpA, KdpB and KdpC.

It localises to the cell membrane. Part of the high-affinity ATP-driven potassium transport (or Kdp) system, which catalyzes the hydrolysis of ATP coupled with the electrogenic transport of potassium into the cytoplasm. This subunit binds the extracellular potassium ions and delivers the ions to the membrane domain of KdpB through an intramembrane tunnel. The polypeptide is Potassium-transporting ATPase potassium-binding subunit (Staphylococcus aureus (strain USA300)).